The chain runs to 620 residues: Chaperone protein HscA homolog (620 aa).

This sequence belongs to the heat shock protein 70 family.

In terms of biological role, chaperone involved in the maturation of iron-sulfur cluster-containing proteins. Has a low intrinsic ATPase activity which is markedly stimulated by HscB. The protein is Chaperone protein HscA homolog of Pseudomonas fluorescens (strain SBW25).